Reading from the N-terminus, the 305-residue chain is Ankyrin repeat domain-containing protein 23 (305 aa).

The stretch at 41 to 72 (QEAVAREKLKLEEEKKKKLERFNSTRFNLDNL) forms a coiled coil. Positions 83–92 (KKRLRHRVPP) are enriched in basic residues. Residues 83–104 (KKRLRHRVPPRKPEPLVKPQSQ) are disordered. 4 ANK repeats span residues 143–172 (LHRT…TVDA), 176–205 (LDRT…RVNA), 209–238 (IGST…HLNA), and 242–271 (EGDT…ELGV). An interaction with TTN region spans residues 178-195 (RTPVFWACRGGHLVILKQ).

As to quaternary structure, interacts with titin/TTN and MYPN. In terms of tissue distribution, mainly expressed in heart, skeletal muscle and brown adipose tissues.

The protein resides in the nucleus. Its function is as follows. May be involved in the energy metabolism. Could be a molecular link between myofibrillar stretch-induced signaling pathways and muscle gene expression. This chain is Ankyrin repeat domain-containing protein 23 (ANKRD23), found in Homo sapiens (Human).